We begin with the raw amino-acid sequence, 239 residues long: MDTLTHLSHTLREAMSDIVPESHPEHPFNLIPELCRKFYDLGWATGTGGGISIKMGENYYIAPSGVQKERIKPNEIFVLNASQDVVEEPRTEKQLKISECTPLFFNAYRMRGAGACLHTHSANCVLISLLCDREFRISHIEMIKGIINNETKKALGFRDTLVIPIIENTDFERDLTASMAECMERYPESCAVLVRRHGMYVWSDTWQKAKGAVECIDYLMGLAIRMRTLGLEWEPKDVK.

Cysteine 100 contributes to the substrate binding site. Zn(2+)-binding residues include histidine 118 and histidine 120. Glutamate 141 (proton donor/acceptor) is an active-site residue. Histidine 197 contributes to the Zn(2+) binding site.

It belongs to the aldolase class II family. MtnB subfamily. The cofactor is Zn(2+).

It is found in the cytoplasm. It carries out the reaction 5-(methylsulfanyl)-D-ribulose 1-phosphate = 5-methylsulfanyl-2,3-dioxopentyl phosphate + H2O. It participates in amino-acid biosynthesis; L-methionine biosynthesis via salvage pathway; L-methionine from S-methyl-5-thio-alpha-D-ribose 1-phosphate: step 2/6. Catalyzes the dehydration of methylthioribulose-1-phosphate (MTRu-1-P) into 2,3-diketo-5-methylthiopentyl-1-phosphate (DK-MTP-1-P). The protein is Probable methylthioribulose-1-phosphate dehydratase of Leishmania major.